A 453-amino-acid polypeptide reads, in one-letter code: mRNA cleavage and polyadenylation factor CLP1 (453 aa).

Residues Glu-31, Lys-70, and 146–151 (NSGKTS) each bind ATP.

It belongs to the Clp1 family. Clp1 subfamily. As to quaternary structure, component of a pre-mRNA cleavage factor complex. Interacts directly with PCF11.

Its subcellular location is the nucleus. Its function is as follows. Required for endonucleolytic cleavage during polyadenylation-dependent pre-mRNA 3'-end formation. This chain is mRNA cleavage and polyadenylation factor CLP1, found in Scheffersomyces stipitis (strain ATCC 58785 / CBS 6054 / NBRC 10063 / NRRL Y-11545) (Yeast).